The primary structure comprises 565 residues: Arginine--tRNA ligase (565 aa).

The 'HIGH' region signature appears at proline 121 to histidine 131.

This sequence belongs to the class-I aminoacyl-tRNA synthetase family. Monomer.

It is found in the cytoplasm. It catalyses the reaction tRNA(Arg) + L-arginine + ATP = L-arginyl-tRNA(Arg) + AMP + diphosphate. This Lactobacillus delbrueckii subsp. bulgaricus (strain ATCC BAA-365 / Lb-18) protein is Arginine--tRNA ligase.